Here is a 204-residue protein sequence, read N- to C-terminus: High frequency lysogenization protein HflD homolog (204 aa).

It belongs to the HflD family.

The protein localises to the cytoplasm. Its subcellular location is the cell inner membrane. The polypeptide is High frequency lysogenization protein HflD homolog (Stenotrophomonas maltophilia (strain R551-3)).